The chain runs to 727 residues: NADH-ubiquinone oxidoreductase 75 kDa subunit, mitochondrial (727 aa).

The N-terminal 23 residues, 1-23, are a transit peptide targeting the mitochondrion; sequence MLRIPVRKALVGLSKSPKGCVRT. The 2Fe-2S ferredoxin-type domain maps to 30 to 108; it reads NLIEVFVDGQ…GWNILTNSEK (79 aa). [2Fe-2S] cluster-binding residues include C64, C75, and C78. K84 is subject to N6-acetyllysine. C92 contributes to the [2Fe-2S] cluster binding site. The 40-residue stretch at 108–147 folds into the 4Fe-4S His(Cys)3-ligated-type domain; the sequence is KSKKAREGVMEFLLANHPLDCPICDQGGECDLQDQSMMFG. [4Fe-4S] cluster contacts are provided by H124, C128, C131, C137, C176, C179, C182, and C226. The 4Fe-4S Mo/W bis-MGD-type domain occupies 245-301; sequence TRKTESIDVMDAVGSNIVVSTRTGEVMRILPRMHEDINEXWISDKTRFAYDGLKRQR. N6-acetyllysine occurs at positions 467, 499, and 709.

This sequence belongs to the complex I 75 kDa subunit family. As to quaternary structure, core subunit of respiratory chain NADH dehydrogenase (Complex I) which is composed of 45 different subunits. This is the largest subunit of complex I and it is a component of the iron-sulfur (IP) fragment of the enzyme. Complex I associates with ubiquinol-cytochrome reductase complex (Complex III) to form supercomplexes. Interacts with MDM2 and AKAP1. [2Fe-2S] cluster is required as a cofactor. Requires [4Fe-4S] cluster as cofactor.

The protein resides in the mitochondrion inner membrane. The catalysed reaction is a ubiquinone + NADH + 5 H(+)(in) = a ubiquinol + NAD(+) + 4 H(+)(out). In terms of biological role, core subunit of the mitochondrial membrane respiratory chain NADH dehydrogenase (Complex I) which catalyzes electron transfer from NADH through the respiratory chain, using ubiquinone as an electron acceptor. Essential for catalysing the entry and efficient transfer of electrons within complex I. Plays a key role in the assembly and stability of complex I and participates in the association of complex I with ubiquinol-cytochrome reductase complex (Complex III) to form supercomplexes. The protein is NADH-ubiquinone oxidoreductase 75 kDa subunit, mitochondrial (NDUFS1) of Gorilla gorilla gorilla (Western lowland gorilla).